Here is a 339-residue protein sequence, read N- to C-terminus: Uroporphyrinogen decarboxylase (339 aa).

Residues 21-25 (RQAGR), Asp71, Tyr147, Ser202, and His315 each bind substrate.

Belongs to the uroporphyrinogen decarboxylase family. In terms of assembly, homodimer.

It is found in the cytoplasm. It carries out the reaction uroporphyrinogen III + 4 H(+) = coproporphyrinogen III + 4 CO2. It functions in the pathway porphyrin-containing compound metabolism; protoporphyrin-IX biosynthesis; coproporphyrinogen-III from 5-aminolevulinate: step 4/4. In terms of biological role, catalyzes the decarboxylation of four acetate groups of uroporphyrinogen-III to yield coproporphyrinogen-III. In Helicobacter acinonychis (strain Sheeba), this protein is Uroporphyrinogen decarboxylase.